A 368-amino-acid chain; its full sequence is Flagellar P-ring protein (368 aa).

An N-terminal signal peptide occupies residues 1–24 (MNSIFRKIVFAAFLLLALPQFALA).

This sequence belongs to the FlgI family. As to quaternary structure, the basal body constitutes a major portion of the flagellar organelle and consists of four rings (L,P,S, and M) mounted on a central rod.

Its subcellular location is the periplasm. It is found in the bacterial flagellum basal body. In terms of biological role, assembles around the rod to form the L-ring and probably protects the motor/basal body from shearing forces during rotation. The polypeptide is Flagellar P-ring protein (Geotalea uraniireducens (strain Rf4) (Geobacter uraniireducens)).